We begin with the raw amino-acid sequence, 155 residues long: Ribosomal RNA large subunit methyltransferase H (155 aa).

S-adenosyl-L-methionine is bound by residues leucine 73, glycine 104, and 123–128; that span reads LSALTL.

The protein belongs to the RNA methyltransferase RlmH family. In terms of assembly, homodimer.

The protein resides in the cytoplasm. The enzyme catalyses pseudouridine(1915) in 23S rRNA + S-adenosyl-L-methionine = N(3)-methylpseudouridine(1915) in 23S rRNA + S-adenosyl-L-homocysteine + H(+). Specifically methylates the pseudouridine at position 1915 (m3Psi1915) in 23S rRNA. The sequence is that of Ribosomal RNA large subunit methyltransferase H from Coxiella burnetii (strain Dugway 5J108-111).